Here is a 515-residue protein sequence, read N- to C-terminus: Histidine ammonia-lyase (515 aa).

The 5-imidazolinone (Ala-Gly) cross-link spans 142 to 144 (ASG). The residue at position 143 (S143) is a 2,3-didehydroalanine (Ser).

This sequence belongs to the PAL/histidase family. Contains an active site 4-methylidene-imidazol-5-one (MIO), which is formed autocatalytically by cyclization and dehydration of residues Ala-Ser-Gly.

Its subcellular location is the cytoplasm. It carries out the reaction L-histidine = trans-urocanate + NH4(+). The protein operates within amino-acid degradation; L-histidine degradation into L-glutamate; N-formimidoyl-L-glutamate from L-histidine: step 1/3. The polypeptide is Histidine ammonia-lyase (Bradyrhizobium sp. (strain ORS 278)).